Consider the following 332-residue polypeptide: MARILDNNVMGNEEFSDRTLRPQYLHEYIGQDKVKEQFAIFIEAAKRRDESLDHVLLFGPPGLGKTTMAFVIANELGVNLKQTSGPAVEKAGDLVAILNELEPGDILFIDEIHRMPMSVEEVLYSAMEDFYIDIMIGAGDTSRSIHLDLPPFTLIGATTRAGMLSNPLRARFGITGHMEYYQEKDLTEIVERTATIFEIKIDHEAARKLACRSRGTPRIANRLLKRVRDYAQIIGDGIITAQITDRALTMLDVDREGLNYIDQKILRTMIEMYQGGPVGLGTLSVNIAEERNTVEEMYEPYLIQKGFLMRTRTGRVATQKAYRHLGYPYQNT.

The segment at 1–181 is large ATPase domain (RuvB-L); it reads MARILDNNVM…FGITGHMEYY (181 aa). Residues Leu20, Arg21, Gly62, Lys65, Thr66, Thr67, 128-130, Arg171, Tyr181, and Arg218 contribute to the ATP site; that span reads EDF. Thr66 is a Mg(2+) binding site. The segment at 182 to 252 is small ATPAse domain (RuvB-S); that stretch reads QEKDLTEIVE…ITDRALTMLD (71 aa). The interval 255–332 is head domain (RuvB-H); that stretch reads REGLNYIDQK…RHLGYPYQNT (78 aa). Residues Arg291, Arg310, Arg312, and Arg315 each coordinate DNA.

This sequence belongs to the RuvB family. As to quaternary structure, homohexamer. Forms an RuvA(8)-RuvB(12)-Holliday junction (HJ) complex. HJ DNA is sandwiched between 2 RuvA tetramers; dsDNA enters through RuvA and exits via RuvB. An RuvB hexamer assembles on each DNA strand where it exits the tetramer. Each RuvB hexamer is contacted by two RuvA subunits (via domain III) on 2 adjacent RuvB subunits; this complex drives branch migration. In the full resolvosome a probable DNA-RuvA(4)-RuvB(12)-RuvC(2) complex forms which resolves the HJ.

It is found in the cytoplasm. The enzyme catalyses ATP + H2O = ADP + phosphate + H(+). The RuvA-RuvB-RuvC complex processes Holliday junction (HJ) DNA during genetic recombination and DNA repair, while the RuvA-RuvB complex plays an important role in the rescue of blocked DNA replication forks via replication fork reversal (RFR). RuvA specifically binds to HJ cruciform DNA, conferring on it an open structure. The RuvB hexamer acts as an ATP-dependent pump, pulling dsDNA into and through the RuvAB complex. RuvB forms 2 homohexamers on either side of HJ DNA bound by 1 or 2 RuvA tetramers; 4 subunits per hexamer contact DNA at a time. Coordinated motions by a converter formed by DNA-disengaged RuvB subunits stimulates ATP hydrolysis and nucleotide exchange. Immobilization of the converter enables RuvB to convert the ATP-contained energy into a lever motion, pulling 2 nucleotides of DNA out of the RuvA tetramer per ATP hydrolyzed, thus driving DNA branch migration. The RuvB motors rotate together with the DNA substrate, which together with the progressing nucleotide cycle form the mechanistic basis for DNA recombination by continuous HJ branch migration. Branch migration allows RuvC to scan DNA until it finds its consensus sequence, where it cleaves and resolves cruciform DNA. The sequence is that of Holliday junction branch migration complex subunit RuvB from Streptococcus pyogenes serotype M18 (strain MGAS8232).